Reading from the N-terminus, the 211-residue chain is Small ribosomal subunit protein uS4 (211 aa).

The tract at residues 27–48 (GRKVLERRGSQPPGQHGASVRR) is disordered. The 64-residue stretch at 99 to 162 (RRLDNVVFRL…RKRDYFKDLE (64 aa)) folds into the S4 RNA-binding domain.

Belongs to the universal ribosomal protein uS4 family. As to quaternary structure, part of the 30S ribosomal subunit. Contacts protein S5. The interaction surface between S4 and S5 is involved in control of translational fidelity.

In terms of biological role, one of the primary rRNA binding proteins, it binds directly to 16S rRNA where it nucleates assembly of the body of the 30S subunit. With S5 and S12 plays an important role in translational accuracy. The protein is Small ribosomal subunit protein uS4 of Herpetosiphon aurantiacus (strain ATCC 23779 / DSM 785 / 114-95).